The chain runs to 422 residues: Phospho-N-acetylmuramoyl-pentapeptide-transferase (422 aa).

The next 9 membrane-spanning stretches (helical) occupy residues 28–48 (LMAIILALLISSIWGDKFINL), 71–91 (VGVPSMGGVIIIVAILIPCLL), 95–115 (LHNIYMILMLITTVWLGSLGF), 136–156 (IIGQVGLGLIVGLTLYLSPDV), 211–231 (AGWILFVIITIFVVTAVSNGA), 246–266 (AIIGLTLGILAYVSSHIEFAG), 279–299 (LVIFICAFIGALIGFLWYNAY), 313–333 (IGGIIAVFAIIIHKELLIPIL), and 399–419 (KITVRFWIVTIVLAAITIITL).

Belongs to the glycosyltransferase 4 family. MraY subfamily. Requires Mg(2+) as cofactor.

It localises to the cell inner membrane. It carries out the reaction UDP-N-acetyl-alpha-D-muramoyl-L-alanyl-gamma-D-glutamyl-meso-2,6-diaminopimeloyl-D-alanyl-D-alanine + di-trans,octa-cis-undecaprenyl phosphate = di-trans,octa-cis-undecaprenyl diphospho-N-acetyl-alpha-D-muramoyl-L-alanyl-D-glutamyl-meso-2,6-diaminopimeloyl-D-alanyl-D-alanine + UMP. Its pathway is cell wall biogenesis; peptidoglycan biosynthesis. Catalyzes the initial step of the lipid cycle reactions in the biosynthesis of the cell wall peptidoglycan: transfers peptidoglycan precursor phospho-MurNAc-pentapeptide from UDP-MurNAc-pentapeptide onto the lipid carrier undecaprenyl phosphate, yielding undecaprenyl-pyrophosphoryl-MurNAc-pentapeptide, known as lipid I. The chain is Phospho-N-acetylmuramoyl-pentapeptide-transferase from Bacteroides fragilis (strain ATCC 25285 / DSM 2151 / CCUG 4856 / JCM 11019 / LMG 10263 / NCTC 9343 / Onslow / VPI 2553 / EN-2).